We begin with the raw amino-acid sequence, 115 residues long: Transcription and mRNA export factor ENY2 (115 aa).

This sequence belongs to the ENY2 family. In terms of assembly, component of a deubiquitination module (DUB module) formed by ENY2, SGF11, and UBP22 in Arabidopsis. Interacts directly with SGF11, but not with UBP22. Interacts with MOS4. Expressed in roots, cotyledons, leaves and upper part of sepals.

The protein resides in the nucleus. It is found in the nucleoplasm. Component of a deubiquitination module (DUB module) that specifically deubiquinates monoubiquinated histone H2B (H2Bub). Does not seem to be a component of the TREX-2 complex. Seems to act independently of the SAGA multiprotein complex. The DUB module is responsible for the major H2Bub deubiquitinase activity in Arabidopsis. The sequence is that of Transcription and mRNA export factor ENY2 from Arabidopsis thaliana (Mouse-ear cress).